Consider the following 150-residue polypeptide: MRSFFLLCALVAVCNAVYTGVAYYDINAGCTGVAYRTSYTQTASCTPIPCTKNTDYQLSILQTCVSAIPQTKGTLEISSYPSHDCSGTPDVGVYNLNTCLPDEQGQFGYLTCNAQYICSDSACKSGCTATPFSDSCTATPRDSTTYKCIP.

An N-terminal signal peptide occupies residues 1-14 (MRSFFLLCALVAVC).

The sequence is that of Plasmin C (PLSC) from Physarum polycephalum (Slime mold).